The following is a 199-amino-acid chain: Recombination protein RecR (199 aa).

The segment at 58–73 (CKKCFNLTSEEECEIC) adopts a C4-type zinc-finger fold. The Toprim domain maps to 81 to 175 (KIICVVAETK…KVTRIAYGLP (95 aa)).

Belongs to the RecR family.

Its function is as follows. May play a role in DNA repair. It seems to be involved in an RecBC-independent recombinational process of DNA repair. It may act with RecF and RecO. The chain is Recombination protein RecR from Prochlorococcus marinus subsp. pastoris (strain CCMP1986 / NIES-2087 / MED4).